The primary structure comprises 294 residues: Serine/threonine-protein kinase Aurora-1 (294 aa).

In terms of domain architecture, Protein kinase spans 31-282 (FDIGKPLGRG…LHKLLEHPWI (252 aa)). ATP is bound by residues 37–45 (LGRGKFGHV) and lysine 60. Residue aspartate 154 is the Proton acceptor of the active site. Residue serine 176 is modified to Phosphoserine. Threonine 185 bears the Phosphothreonine mark.

It belongs to the protein kinase superfamily. Ser/Thr protein kinase family. Aurora subfamily. Interacts with TPX2. Phosphorylation at Thr-185 may regulate activity and degradation of AUR1 in a cell cycle dependent manner. In terms of tissue distribution, abundant in roots, flowers and flower buds, low or absent in expanded leaves, stems and siliques.

The protein localises to the nucleus membrane. It localises to the cytoplasm. It is found in the cytoskeleton. The protein resides in the spindle. Its subcellular location is the spindle pole. The protein localises to the phragmoplast. The catalysed reaction is L-seryl-[protein] + ATP = O-phospho-L-seryl-[protein] + ADP + H(+). The enzyme catalyses L-threonyl-[protein] + ATP = O-phospho-L-threonyl-[protein] + ADP + H(+). Its function is as follows. Phosphorylates specifically 'Ser-10' of histone H3 in vitro and colocalizes with phosphorylated histone H3 during mitosis. Associates with cytoskeletal structures that are necessary for cytokinesis and with the microtubule spindle. Also colocalizes with gamma-tubulin and function in microtubule organizing centers (MTOCs). In contrast with the mammalian B-type Aurora, AUR1 has no kinase activity toward 'Ser-28' of histone H3. The sequence is that of Serine/threonine-protein kinase Aurora-1 (AUR1) from Arabidopsis thaliana (Mouse-ear cress).